We begin with the raw amino-acid sequence, 523 residues long: Bifunctional purine biosynthesis protein PurH (523 aa).

Residues 1-152 (MSTDDGRRPI…KNHPSAAVVT (152 aa)) form the MGS-like domain.

The protein belongs to the PurH family.

The catalysed reaction is (6R)-10-formyltetrahydrofolate + 5-amino-1-(5-phospho-beta-D-ribosyl)imidazole-4-carboxamide = 5-formamido-1-(5-phospho-D-ribosyl)imidazole-4-carboxamide + (6S)-5,6,7,8-tetrahydrofolate. It catalyses the reaction IMP + H2O = 5-formamido-1-(5-phospho-D-ribosyl)imidazole-4-carboxamide. Its pathway is purine metabolism; IMP biosynthesis via de novo pathway; 5-formamido-1-(5-phospho-D-ribosyl)imidazole-4-carboxamide from 5-amino-1-(5-phospho-D-ribosyl)imidazole-4-carboxamide (10-formyl THF route): step 1/1. It functions in the pathway purine metabolism; IMP biosynthesis via de novo pathway; IMP from 5-formamido-1-(5-phospho-D-ribosyl)imidazole-4-carboxamide: step 1/1. This chain is Bifunctional purine biosynthesis protein PurH, found in Mycobacterium bovis (strain BCG / Pasteur 1173P2).